A 213-amino-acid polypeptide reads, in one-letter code: Riboflavin/roseoflavin transporter RibM (213 aa).

5 helical membrane passes run 15–35 (HIIWSDMVGNILGLITLALGF), 38–58 (SLWTWPVQFLSGLVLFGAFYG), 107–129 (IAAAAVGTVAVALLFKAYPSLSW), 136–158 (YIFVGTIVAMYAQARGMVEFWFA), and 171–193 (FANGYAFSGFVYVIYGALVLWGM).

This sequence belongs to the nicotinamide ribonucleoside (NR) uptake permease (TC 4.B.1) family.

The protein localises to the cell membrane. In terms of biological role, transports riboflavin and roseoflavin. Can also transport FMN and FAD. May confer roseoflavin resistance to S.davawensis, which naturally produces this antibiotic during stationary growth phase. This chain is Riboflavin/roseoflavin transporter RibM, found in Streptomyces davaonensis (strain DSM 101723 / JCM 4913 / KCC S-0913 / 768).